The following is a 210-amino-acid chain: N-(5'-phosphoribosyl)anthranilate isomerase (210 aa).

It belongs to the TrpF family.

It catalyses the reaction N-(5-phospho-beta-D-ribosyl)anthranilate = 1-(2-carboxyphenylamino)-1-deoxy-D-ribulose 5-phosphate. It functions in the pathway amino-acid biosynthesis; L-tryptophan biosynthesis; L-tryptophan from chorismate: step 3/5. In Pseudomonas fluorescens (strain SBW25), this protein is N-(5'-phosphoribosyl)anthranilate isomerase.